A 320-amino-acid chain; its full sequence is E3 ubiquitin-protein ligase RZF1 (320 aa).

Position 2 is an N-acetylserine (Ser-2). The RING-type; atypical zinc-finger motif lies at 186-227 (CPVCKDEFELKSEAKQMPCHHIYHSDCIVPWLVQHNSCPVCR). The segment at 229 to 320 (ELPSRGSSSS…MGYSGWPFDY (92 aa)) is disordered. Low complexity-rich tracts occupy residues 232 to 249 (SRGSSSSTQSSQNRSTNG) and 295 to 308 (QQQQQHQHQHQQQQ).

Expressed in seedlings and in flowers.

The catalysed reaction is S-ubiquitinyl-[E2 ubiquitin-conjugating enzyme]-L-cysteine + [acceptor protein]-L-lysine = [E2 ubiquitin-conjugating enzyme]-L-cysteine + N(6)-ubiquitinyl-[acceptor protein]-L-lysine.. E3 ubiquitin-protein ligase that promotes osmotic stress and abscisic acid (ABA) responses. Negatively regulates drought-mediated control of early seedling development, probably by influencing proline content, water loss, membrane ion leakage and the expression of dehydration stress-related genes (e.g. RAB18, RD29A, RD29B, AOX1A, ERD15, ERD1, COR15A, P5CS1 and P5CR). Modulates bZIP11 accumulation during rehydration following drought. In Arabidopsis thaliana (Mouse-ear cress), this protein is E3 ubiquitin-protein ligase RZF1.